The following is a 544-amino-acid chain: Sphingosine-1-phosphate lyase (544 aa).

The Lumenal segment spans residues 1–29 (MDSFSYSSMKSMLIQARGSLNSRLSEFEP). A helical; Signal-anchor for type III membrane protein membrane pass occupies residues 30–50 (LVLLLVPLVSLFLAQIIGSVF). Over 51–544 (GVVHEKGLKA…LLVSFMDSQY (494 aa)) the chain is Cytoplasmic. Lys-349 is modified (N6-(pyridoxal phosphate)lysine).

It belongs to the group II decarboxylase family. Sphingosine-1-phosphate lyase subfamily. It depends on pyridoxal 5'-phosphate as a cofactor. Expressed in the peripheral parts of leaves and the bases of trichomes.

It localises to the endoplasmic reticulum membrane. The enzyme catalyses sphinganine 1-phosphate = hexadecanal + phosphoethanolamine. It participates in lipid metabolism; sphingolipid metabolism. Its function is as follows. Cleaves phosphorylated sphingoid bases (PSBs), such as sphingosine-1-phosphate, into fatty aldehydes and phosphoethanolamine. May play a minor role in maintenance of sphingolipid metabolism during normal plant development and growth, but be required for maintaining sphingoid long chain bases (LCB) and their phosphorylated derivatives (LCB-P) levels when sphingolipid metabolism is perturbed. May play a role in dehydration stress. The chain is Sphingosine-1-phosphate lyase (DPL1) from Arabidopsis thaliana (Mouse-ear cress).